A 560-amino-acid chain; its full sequence is DNA ligase B (560 aa).

Catalysis depends on Lys124, which acts as the N6-AMP-lysine intermediate.

It belongs to the NAD-dependent DNA ligase family. LigB subfamily.

The catalysed reaction is NAD(+) + (deoxyribonucleotide)n-3'-hydroxyl + 5'-phospho-(deoxyribonucleotide)m = (deoxyribonucleotide)n+m + AMP + beta-nicotinamide D-nucleotide.. Its function is as follows. Catalyzes the formation of phosphodiester linkages between 5'-phosphoryl and 3'-hydroxyl groups in double-stranded DNA using NAD as a coenzyme and as the energy source for the reaction. This is DNA ligase B from Escherichia coli O17:K52:H18 (strain UMN026 / ExPEC).